The following is a 240-amino-acid chain: Pyridoxine 5'-phosphate synthase (240 aa).

3-amino-2-oxopropyl phosphate is bound at residue asparagine 7. 9–10 serves as a coordination point for 1-deoxy-D-xylulose 5-phosphate; it reads DH. Position 18 (arginine 18) interacts with 3-amino-2-oxopropyl phosphate. The active-site Proton acceptor is histidine 43. Residues arginine 45 and histidine 50 each coordinate 1-deoxy-D-xylulose 5-phosphate. Catalysis depends on glutamate 70, which acts as the Proton acceptor. Threonine 100 is a binding site for 1-deoxy-D-xylulose 5-phosphate. Histidine 191 acts as the Proton donor in catalysis. 3-amino-2-oxopropyl phosphate contacts are provided by residues glycine 192 and 213 to 214; that span reads GH.

The protein belongs to the PNP synthase family. In terms of assembly, homooctamer; tetramer of dimers.

The protein localises to the cytoplasm. The enzyme catalyses 3-amino-2-oxopropyl phosphate + 1-deoxy-D-xylulose 5-phosphate = pyridoxine 5'-phosphate + phosphate + 2 H2O + H(+). Its pathway is cofactor biosynthesis; pyridoxine 5'-phosphate biosynthesis; pyridoxine 5'-phosphate from D-erythrose 4-phosphate: step 5/5. Its function is as follows. Catalyzes the complicated ring closure reaction between the two acyclic compounds 1-deoxy-D-xylulose-5-phosphate (DXP) and 3-amino-2-oxopropyl phosphate (1-amino-acetone-3-phosphate or AAP) to form pyridoxine 5'-phosphate (PNP) and inorganic phosphate. The protein is Pyridoxine 5'-phosphate synthase of Synechococcus elongatus (strain ATCC 33912 / PCC 7942 / FACHB-805) (Anacystis nidulans R2).